A 250-amino-acid chain; its full sequence is Indole-3-glycerol phosphate synthase (250 aa).

The protein belongs to the TrpC family.

It catalyses the reaction 1-(2-carboxyphenylamino)-1-deoxy-D-ribulose 5-phosphate + H(+) = (1S,2R)-1-C-(indol-3-yl)glycerol 3-phosphate + CO2 + H2O. It participates in amino-acid biosynthesis; L-tryptophan biosynthesis; L-tryptophan from chorismate: step 4/5. The polypeptide is Indole-3-glycerol phosphate synthase (Picrophilus torridus (strain ATCC 700027 / DSM 9790 / JCM 10055 / NBRC 100828 / KAW 2/3)).